A 261-amino-acid chain; its full sequence is 8-demethyl-8-(2,3-dimethoxy-alpha-L-rhamnosyl)-tetracenomycin-C 4'-O-methyltransferase (261 aa).

S-adenosyl-L-methionine contacts are provided by residues 53–54, 81–85, 111–115, Phe167, 185–186, and Ser191; these read TM, ETGVW, DSFEG, and DG. Asp185 provides a ligand contact to Mg(2+). Asp212 and Asp213 together coordinate Mg(2+).

Belongs to the methyltransferase TylF/MycF family. Requires Mg(2+) as cofactor.

It carries out the reaction 8-demethyl-8-(2,3-di-O-methyl-alpha-L-rhamnosyl)-tetracenomycin C + S-adenosyl-L-methionine = 8-demethyl-8-(2,3,4-tri-O-methyl-alpha-L-rhamnosyl)-tetracenomycin C + S-adenosyl-L-homocysteine + H(+). It participates in antibiotic biosynthesis. O-methyltransferase involved in the biosynthesis of the permethylated L-rhamnose moiety of elloramycin, an antitumor polyketide. Mediates the methylation of the hydroxy groups at the 4'-position after the sugar moiety has been attached to the aglycon. The protein is 8-demethyl-8-(2,3-dimethoxy-alpha-L-rhamnosyl)-tetracenomycin-C 4'-O-methyltransferase of Streptomyces olivaceus.